We begin with the raw amino-acid sequence, 55 residues long: Glycine-rich antimicrobial peptide Pg-AMP (55 aa).

Residues 18-39 (GYGGYGGGRYGGGYGSGRGQPV) are compositionally biased toward gly residues. The disordered stretch occupies residues 18–55 (GYGGYGGGRYGGGYGSGRGQPVGQGVERSHDDNRNQPR). The segment covering 44–55 (ERSHDDNRNQPR) has biased composition (basic and acidic residues).

In terms of assembly, monomer and homodimer. Might act by homodimer formation.

Functionally, has antibacterial activity against the Gram-negative bacteria Klebsiella sp., Proteus sp., E.coli ATCC 8739 (MIC=72 ug/ml) and K.pneumoniae (MIC=32 ug/ml). Has no activity against the Gram-negative bacterium S.typhimurium or the Gram-positive bacterium S.aureus. Does not have antifungal activity against the human and plant pathogenic fungi F.oxysporum, A.fumigatus and R.solani. This Psidium guajava (Guava) protein is Glycine-rich antimicrobial peptide Pg-AMP.